An 89-amino-acid polypeptide reads, in one-letter code: Alpha-latrotoxin associated low molecular weight protein SGV242-280 (89 aa).

Positions 1-18 (MSKLHFLILLSVIVSVFC) are cleaved as a signal peptide.

Belongs to the arthropod CHH/MIH/GIH/VIH hormone family. As to expression, expressed by the venom gland.

It localises to the secreted. Its function is as follows. May increase the toxicity of alpha-latrotoxin and/or other venom components. Is non-toxic to mice and to the cockroach Periplaneta americana. The protein is Alpha-latrotoxin associated low molecular weight protein SGV242-280 of Steatoda grossa (False black widow).